The chain runs to 1163 residues: Spike glycoprotein (1163 aa).

The first 18 residues, 1–18 (MLERSLLLATLLSALCSA), serve as a signal peptide directing secretion. At 19-1096 (NLFGNNSYVY…LKTYIKWPWY (1078 aa)) the chain is on the extracellular side. 24 N-linked (GlcNAc...) asparagine; by host glycosylation sites follow: asparagine 23, asparagine 51, asparagine 74, asparagine 102, asparagine 139, asparagine 145, asparagine 164, asparagine 179, asparagine 213, asparagine 238, asparagine 248, asparagine 265, asparagine 272, asparagine 277, asparagine 307, asparagine 426, asparagine 448, asparagine 514, asparagine 531, asparagine 543, asparagine 580, asparagine 592, asparagine 670, and asparagine 677. The segment at 770-875 (IPFATQLQAR…QVDRIITGRL (106 aa)) is heptad repeat 1 (HR1). Residues 823–867 (QDVVNKQSSILTETMASLNKNFGAISSVLQDIYQQLDSIQADAQV) are a coiled coil. 7 N-linked (GlcNAc...) asparagine; by host glycosylation sites follow: asparagine 948, asparagine 961, asparagine 980, asparagine 1015, asparagine 1039, asparagine 1052, and asparagine 1075. The heptad repeat 2 (HR2) stretch occupies residues 1025–1106 (NDDFDFDDEL…VWLAIAFLTI (82 aa)). A coiled-coil region spans residues 1056-1084 (PILDIGSEIDRIQGVIQGLNDSLIDLETL). A helical transmembrane segment spans residues 1097 to 1117 (VWLAIAFLTIIFILVLCWIFF). Topologically, residues 1118–1163 (MTGCCGCCCGCFGIIPLMSKCGKKSSYYTTFDNDVVYEQYRPKKSV) are cytoplasmic. The short motif at 1160 to 1163 (KKSV) is the Di-lysine motif element.

Belongs to the gammacoronaviruses spike protein family. Homotrimer; each monomer consists of a S1 and a S2 subunit. The resulting peplomers protrude from the virus surface as spikes. Post-translationally, specific enzymatic cleavages in vivo yield mature proteins. The precursor is processed into S1 and S2 by host cell furin or furin-like protease to yield the mature S1 and S2 proteins. The cleavage site between S1 and S2 requires the optimal sequence [KR]-X-[KR]-R. Additionally, a second cleavage leads to the release of a fusion peptide after viral attachment to host cell receptor.

It localises to the virion membrane. It is found in the host endoplasmic reticulum-Golgi intermediate compartment membrane. Attaches the virion to the host cell membrane by interacting with sialic acids, initiating the infection. Functionally, mediates fusion of the virion and cellular membranes by acting as a class I viral fusion protein. Under the current model, the protein has at least 3 conformational states: pre-fusion native state, pre-hairpin intermediate state, and post-fusion hairpin state. During viral and target cell membrane fusion, the coiled coil regions (heptad repeats) assume a trimer-of-hairpins structure, positioning the fusion peptide in close proximity to the C-terminal region of the ectodomain. The formation of this structure appears to drive apposition and subsequent fusion of viral and target cell membranes. Its function is as follows. Acts as a viral fusion peptide after S2 cleavage occurring upon virus endocytosis. In Gallus gallus (Chicken), this protein is Spike glycoprotein.